The following is a 678-amino-acid chain: Pentatricopeptide repeat-containing protein At5g39980, chloroplastic (678 aa).

A chloroplast-targeting transit peptide spans 1–64; the sequence is MYIEIASSSS…NKKVWRKQPE (64 aa). PPR repeat units follow at residues 154–188, 189–223, 224–258, 259–293, 294–328, 329–363, 364–398, 399–433, 434–468, 469–503, 535–569, 570–604, 605–638, and 639–674; these read SVFAYNVVLRNVLRAKQFDIAHGLFDEMRQRALAP, DRYTYSTLITSFGKEGMFDSALSWLQKMEQDRVSG, DLVLYSNLIELSRRLCDYSKAISIFSRLKRSGITP, DLVAYNSMINVYGKAKLFREARLLIKEMNEAGVLP, NTVSYSTLLSVYVENHKFLEALSVFAEMKEVNCAL, DLTTCNIMIDVYGQLDMVKEADRLFWSLRKMDIEP, NVVSYNTILRVYGEAELFGEAIHLFRLMQRKDIEQ, NVVTYNTMIKIYGKTMEHEKATNLVQEMQSRGIEP, NAITYSTIISIWGKAGKLDRAATLFQKLRSSGVEI, DQVLYQTMIVAYERVGLMGHAKRLLHELKLPDNIP, DISVFGCMINLYSRNQRYVNVIEVFEKMRTAGYFP, DSNVIAMVLNAYGKQREFEKADTVYREMQEEGCVF, PDEVHFQMLSLYSSKKDFEMVESLFQRLESDPNV, and NSKELHLVVAALYERADKLNDASRVMNRMRERGILK.

It belongs to the PPR family. P subfamily.

It is found in the plastid. The protein localises to the chloroplast. The sequence is that of Pentatricopeptide repeat-containing protein At5g39980, chloroplastic from Arabidopsis thaliana (Mouse-ear cress).